A 515-amino-acid polypeptide reads, in one-letter code: 3,4-dehydroadipyl-CoA semialdehyde dehydrogenase (515 aa).

Catalysis depends on residues glutamate 255 and cysteine 294. The tract at residues 470–515 (VMPTCLHGGPRARRRRRGVGRSARAGDVSPPLRRAGRPRGAGSPVA) is disordered. Positions 479–488 (PRARRRRRGV) are enriched in basic residues. The span at 489-515 (GRSARAGDVSPPLRRAGRPRGAGSPVA) shows a compositional bias: low complexity.

The protein belongs to the aldehyde dehydrogenase family. Homodimer.

The catalysed reaction is (3Z)-6-oxohex-3-enoyl-CoA + NADP(+) + H2O = cis-3,4-dehydroadipyl-CoA + NADPH + 2 H(+). In terms of biological role, catalyzes the NADP-dependent oxidation of 3,4-dehydroadipyl-CoA semialdehyde to form cis-3,4-dehydroadipyl-CoA. The protein is 3,4-dehydroadipyl-CoA semialdehyde dehydrogenase (boxD) of Aromatoleum evansii (Azoarcus evansii).